The chain runs to 289 residues: Heme oxygenase 1 (289 aa).

Residues 1–266 lie on the Cytoplasmic side of the membrane; the sequence is MERPQLDSMS…SQISTSSSQT (266 aa). 4 residues coordinate heme b: Lys18, His25, Tyr134, and Arg183. A disordered region spans residues 225-261; it reads HKDQSPSQTEFLRQRPASLVQDTTSAETPRGKSQIST. Phosphoserine occurs at positions 229 and 242. Over residues 244–261 the composition is skewed to polar residues; the sequence is VQDTTSAETPRGKSQIST. The helical; Anchor for type IV membrane protein transmembrane segment at 267-289 threads the bilayer; that stretch reads PLLRWVLTLSFLLATVAVGIYAM.

This sequence belongs to the heme oxygenase family. Homodimer and higher order homooligomer. Oligomerization is crucial for its stability and function in the endoplasmic reticulum. Interacts with FLVCR2; this interaction is potentiated in the presence of heme. Post-translationally, a soluble form arises by proteolytic removal of the membrane anchor.

It is found in the endoplasmic reticulum membrane. The catalysed reaction is heme b + 3 reduced [NADPH--hemoprotein reductase] + 3 O2 = biliverdin IXalpha + CO + Fe(2+) + 3 oxidized [NADPH--hemoprotein reductase] + 3 H2O + H(+). Its activity is regulated as follows. Inhibited by metalloporphyrins such as Sn- and Zn-protoporphyrins. Catalyzes the oxidative cleavage of heme at the alpha-methene bridge carbon, released as carbon monoxide (CO), to generate biliverdin IXalpha, while releasing the central heme iron chelate as ferrous iron. Affords protection against programmed cell death and this cytoprotective effect relies on its ability to catabolize free heme and prevent it from sensitizing cells to undergo apoptosis. Its function is as follows. Catalyzes the oxidative cleavage of heme at the alpha-methene bridge carbon, released as carbon monoxide (CO), to generate biliverdin IXalpha, while releasing the central heme iron chelate as ferrous iron. In Rattus norvegicus (Rat), this protein is Heme oxygenase 1 (Hmox1).